The following is a 100-amino-acid chain: Urease subunit gamma (100 aa).

Belongs to the urease gamma subunit family. Heterotrimer of UreA (gamma), UreB (beta) and UreC (alpha) subunits. Three heterotrimers associate to form the active enzyme.

It is found in the cytoplasm. It catalyses the reaction urea + 2 H2O + H(+) = hydrogencarbonate + 2 NH4(+). It participates in nitrogen metabolism; urea degradation; CO(2) and NH(3) from urea (urease route): step 1/1. The protein is Urease subunit gamma of Jannaschia sp. (strain CCS1).